The sequence spans 684 residues: Early phosphoprotein p84 (684 aa).

Disordered stretches follow at residues 166 to 301 (LGGS…MSLP), 317 to 336 (SSAV…HHNA), 357 to 393 (VVSS…AAAT), 407 to 452 (RAPA…SPRF), and 569 to 657 (SNSS…GPSF). Basic and acidic residues predominate over residues 180–191 (EQQRRRQEQRHE). A compositionally biased stretch (gly residues) spans 201 to 220 (AGGGGGGGASGGGGGGGSGG). 2 stretches are compositionally biased toward basic and acidic residues: residues 232-245 (RDPR…ERRP) and 258-272 (REAK…HEGH). Residues 261–264 (KRQK) carry the Nuclear localization signal motif. Gly residues predominate over residues 285 to 296 (GGAGGGGGGGSG). The segment covering 326-335 (NHHHHHHHHN) has biased composition (basic residues). Over residues 359-377 (SSPSSTSPSSLLSLPRPSS) the composition is skewed to low complexity. Residues 425 to 442 (STTPVSNCRVPPNSQESA) show a composition bias toward polar residues. A compositionally biased stretch (pro residues) spans 578–587 (PLPPPPPPPG). Residues 598-608 (RGGGGGGGGGR) show a composition bias toward gly residues. A compositionally biased stretch (low complexity) spans 612-622 (RQAASSSSSSS).

This sequence belongs to the herpesviridae U79/UL112 family. In terms of assembly, isoforms 1, 2, 3 and 4 interacts with themselves and with each other via their shared N-terminal regions; these interactions are important to both their intranuclear targeting and the recruitment of UL44 to subnuclear sites for viral replication.

It localises to the host nucleus. The protein resides in the virion. In terms of biological role, needed for efficient replication. Recruits the DNA polymerase processivity factor to pre-replication foci. The protein is Early phosphoprotein p84 (UL112/UL113) of Homo sapiens (Human).